A 332-amino-acid polypeptide reads, in one-letter code: tRNA dimethylallyltransferase (332 aa).

Glycine 17–serine 24 is a binding site for ATP. Position 19-24 (threonine 19–serine 24) interacts with substrate. 2 interaction with substrate tRNA regions span residues aspartate 42–glutamine 45 and glutamine 166–arginine 170.

This sequence belongs to the IPP transferase family. In terms of assembly, monomer. Mg(2+) serves as cofactor.

The catalysed reaction is adenosine(37) in tRNA + dimethylallyl diphosphate = N(6)-dimethylallyladenosine(37) in tRNA + diphosphate. Catalyzes the transfer of a dimethylallyl group onto the adenine at position 37 in tRNAs that read codons beginning with uridine, leading to the formation of N6-(dimethylallyl)adenosine (i(6)A). In Gluconobacter oxydans (strain 621H) (Gluconobacter suboxydans), this protein is tRNA dimethylallyltransferase.